Reading from the N-terminus, the 434-residue chain is Ribosomal protein uS12 methylthiotransferase RimO (434 aa).

In terms of domain architecture, MTTase N-terminal spans proline 9 to arginine 125. Positions 18, 54, 88, 149, 153, and 156 each coordinate [4Fe-4S] cluster. In terms of domain architecture, Radical SAM core spans leucine 135 to serine 364. In terms of domain architecture, TRAM spans arginine 367–glycine 434.

It belongs to the methylthiotransferase family. RimO subfamily. The cofactor is [4Fe-4S] cluster.

It is found in the cytoplasm. The enzyme catalyses L-aspartate(89)-[ribosomal protein uS12]-hydrogen + (sulfur carrier)-SH + AH2 + 2 S-adenosyl-L-methionine = 3-methylsulfanyl-L-aspartate(89)-[ribosomal protein uS12]-hydrogen + (sulfur carrier)-H + 5'-deoxyadenosine + L-methionine + A + S-adenosyl-L-homocysteine + 2 H(+). Catalyzes the methylthiolation of an aspartic acid residue of ribosomal protein uS12. The chain is Ribosomal protein uS12 methylthiotransferase RimO from Chlorobaculum tepidum (strain ATCC 49652 / DSM 12025 / NBRC 103806 / TLS) (Chlorobium tepidum).